The following is a 294-amino-acid chain: Bifunctional protein FolD 1 (294 aa).

Residues 165–167 (GRS), S190, and T231 contribute to the NADP(+) site.

This sequence belongs to the tetrahydrofolate dehydrogenase/cyclohydrolase family. As to quaternary structure, homodimer.

It catalyses the reaction (6R)-5,10-methylene-5,6,7,8-tetrahydrofolate + NADP(+) = (6R)-5,10-methenyltetrahydrofolate + NADPH. The catalysed reaction is (6R)-5,10-methenyltetrahydrofolate + H2O = (6R)-10-formyltetrahydrofolate + H(+). The protein operates within one-carbon metabolism; tetrahydrofolate interconversion. In terms of biological role, catalyzes the oxidation of 5,10-methylenetetrahydrofolate to 5,10-methenyltetrahydrofolate and then the hydrolysis of 5,10-methenyltetrahydrofolate to 10-formyltetrahydrofolate. This Paenarthrobacter aurescens (strain TC1) protein is Bifunctional protein FolD 1.